The primary structure comprises 470 residues: Ribosomal protein uS12 methylthiotransferase RimO (470 aa).

An MTTase N-terminal domain is found at 4-120; that stretch reads TRVYLHTLGC…IARVVSDAQA (117 aa). 6 residues coordinate [4Fe-4S] cluster: Cys-13, Cys-49, Cys-83, Cys-155, Cys-159, and Cys-162. A Radical SAM core domain is found at 141 to 371; sequence SLPSHTAYLK…MALQQEISRE (231 aa). One can recognise a TRAM domain in the interval 374–442; sequence RAMVGRRLEV…EYDLVGHVVA (69 aa). The segment at 447 to 470 is disordered; sequence RARRPLPAPAGGETPRRGGLPVVG.

The protein belongs to the methylthiotransferase family. RimO subfamily. It depends on [4Fe-4S] cluster as a cofactor.

It is found in the cytoplasm. It carries out the reaction L-aspartate(89)-[ribosomal protein uS12]-hydrogen + (sulfur carrier)-SH + AH2 + 2 S-adenosyl-L-methionine = 3-methylsulfanyl-L-aspartate(89)-[ribosomal protein uS12]-hydrogen + (sulfur carrier)-H + 5'-deoxyadenosine + L-methionine + A + S-adenosyl-L-homocysteine + 2 H(+). Catalyzes the methylthiolation of an aspartic acid residue of ribosomal protein uS12. This Anaeromyxobacter sp. (strain Fw109-5) protein is Ribosomal protein uS12 methylthiotransferase RimO.